The following is a 492-amino-acid chain: Dipeptide and tripeptide permease A (492 aa).

Residues 1 to 20 lie on the Cytoplasmic side of the membrane; it reads MSTANKHPEAASLNAFKQPR. A helical transmembrane segment spans residues 21–43; it reads SFYLIFSIELWERFGYYGLQGIM. Residues 44 to 58 lie on the Periplasmic side of the membrane; that stretch reads AVYLVKMLGMSEAQS. The helical transmembrane segment at 59–79 threads the bilayer; the sequence is ITLFASFSALVYGLIAVGGWL. Residues 80-88 lie on the Cytoplasmic side of the membrane; that stretch reads GDKVLGTKR. A helical membrane pass occupies residues 89–109; the sequence is VIVLGTLVLALGYALVAWSGH. A topological domain (periplasmic) is located at residue aspartate 110. A helical membrane pass occupies residues 111 to 131; that stretch reads IAMIYFGMATIAVGNGLFKAN. Topologically, residues 132–152 are cytoplasmic; it reads PSSLLSTCYEKDDPRLDGAFT. A helical membrane pass occupies residues 153-173; sequence MYYMAINIGSFFSMLATPWLA. At 174-178 the chain is on the periplasmic side; it reads AQFGW. A helical transmembrane segment spans residues 179–199; that stretch reads STAFGLSFVGMLITLVNFMFF. At 200-217 the chain is on the cytoplasmic side; it reads RKWVKDHGSKPDFAPLNM. Residues 218 to 238 traverse the membrane as a helical segment; it reads GKLLVTLLGIAVMIAAATWLL. Residues 239-245 are Periplasmic-facing; the sequence is HNQDIAR. The helical transmembrane segment at 246-266 threads the bilayer; it reads MVLGAVAVAIVVIFTKEALTL. Over 267 to 273 the chain is Cytoplasmic; sequence KGAARRK. The helical transmembrane segment at 274–294 threads the bilayer; it reads MIVAFLLMLEAIVFFVLYMQM. The Periplasmic portion of the chain corresponds to 295–319; that stretch reads PTSLNFFAIRNVEHSLLGIAFQPEQ. The helical transmembrane segment at 320 to 340 threads the bilayer; sequence FQALNPFWIMIFSPLLAALYN. The Cytoplasmic portion of the chain corresponds to 341–351; that stretch reads KLGDRMPMPHK. The chain crosses the membrane as a helical span at residues 352-372; it reads FALGMVLCSAAFLVLPLGASL. Residues 373–377 lie on the Periplasmic side of the membrane; sequence ANKMG. Residues 378–398 traverse the membrane as a helical segment; the sequence is IVSVGWLVLSYALQSVGELMI. The Cytoplasmic segment spans residues 399–413; that stretch reads SGLGLAMVAQLVPQR. A helical transmembrane segment spans residues 414-434; sequence LMGFIMGSWFLTTAGAAMVAG. Residues 435–458 are Periplasmic-facing; that stretch reads KVANLMAVPENITNPLLSLHVYGD. The helical transmembrane segment at 459–479 threads the bilayer; the sequence is IFFKIGITTGVIAVLMILAAP. Residues 480-492 lie on the Cytoplasmic side of the membrane; the sequence is LLNRMTQDEQPGV.

This sequence belongs to the major facilitator superfamily. Proton-dependent oligopeptide transporter (POT/PTR) (TC 2.A.17) family. DtpA subfamily.

The protein resides in the cell inner membrane. In terms of biological role, proton-dependent permease that transports di- and tripeptides. This chain is Dipeptide and tripeptide permease A, found in Erwinia pyrifoliae (strain DSM 12163 / CIP 106111 / Ep16/96).